The primary structure comprises 505 residues: uncharacterized protein (505 aa).

Over residues 1-16 the composition is skewed to polar residues; that stretch reads MPPTASLTRSPPTASQ. A disordered region spans residues 1 to 474; that stretch reads MPPTASLTRS…TPPTASLTRT (474 aa). Composition is skewed to low complexity over residues 17-33 and 40-59; these read TRTL…PRAS and TASL…PPRA. Residues 66–78 show a composition bias toward polar residues; that stretch reads SRASLTRTLSRAS. Low complexity-rich tracts occupy residues 96–122, 129–140, and 147–158; these read SLTR…PPRT, PRTSQTRTPPRA, and SRASRTRTPPRA. Composition is skewed to polar residues over residues 165 to 177 and 188 to 200; these read SRAS…SRAS and TRTP…TRTP. Residues 201 to 226 are compositionally biased toward low complexity; sequence PTASLTRASRTRTPPRTSQTRTPPRA. Polar residues-rich tracts occupy residues 233–254, 265–293, 309–329, 345–365, 373–383, 399–408, and 435–448; these read SRAS…SRAS, TRTP…SLTR, LTRT…SLTR, TRTPSRASLTR, LTRSPPTASL, and LTRS…TRTP. The segment covering 453–474 has biased composition (low complexity); the sequence is LRRTPPRTSLTRTPPTASLTRT.

This is an uncharacterized protein from Homo sapiens (Human).